Here is a 296-residue protein sequence, read N- to C-terminus: Enoyl-CoA hydratase domain-containing protein 2, mitochondrial (296 aa).

A mitochondrion-targeting transit peptide spans 1-17; sequence MLRVLPRALRLPCSWRF. At Lys101 the chain carries N6-acetyllysine; alternate. Lys101 is subject to N6-succinyllysine; alternate.

This sequence belongs to the enoyl-CoA hydratase/isomerase family.

The protein localises to the mitochondrion. This Mus musculus (Mouse) protein is Enoyl-CoA hydratase domain-containing protein 2, mitochondrial (Echdc2).